The following is a 502-amino-acid chain: Nostrin (502 aa).

In terms of domain architecture, F-BAR spans 1-260; it reads MRDPLTDCSY…AISKVDVEKD (260 aa). At Ser114 the chain carries Phosphoserine. Coiled coils occupy residues 160–230 and 305–335; these read SMTQ…LNQY and KLWRLQKDIEKASRDKEGLEQKLKALASSAS. In terms of domain architecture, REM-1 spans 292 to 372; sequence PMDKERRKSL…SYKLSTVLAD (81 aa). A disordered region spans residues 413-437; sequence KAESKAPAGEQNNPSSSRPGSSVSQ. Over residues 423 to 437 the composition is skewed to low complexity; that stretch reads QNNPSSSRPGSSVSQ. The SH3 domain occupies 438 to 497; it reads GNNQLCKALYTFQARQDDELNLEKGDIVTIHEKKEEGWWFGSLNGKKGHFPAAYVEELPP. The residue at position 479 (Ser479) is a Phosphoserine.

As to quaternary structure, homotrimer. Interacts with DAB2. Interacts with NOS3, WASL and CAV1. Interacts (via SH3 domain) with DNM2; this interaction allows the recruitment of NOS3 to dynamin-positive structures. As to expression, over-expressed in brain microcapillaries from spontaneously hypertensive rats.

It localises to the cell membrane. Its subcellular location is the cytoplasmic vesicle. The protein localises to the cytoplasm. The protein resides in the cytoskeleton. It is found in the nucleus. Multivalent adapter protein which may decrease NOS3 activity by inducing its translocation away from the plasma membrane. The sequence is that of Nostrin from Rattus norvegicus (Rat).